Here is a 135-residue protein sequence, read N- to C-terminus: Fatty acid-binding protein 5 (135 aa).

At alanine 2 the chain carries N-acetylalanine. Lysine 17 is subject to N6-acetyllysine. Residue tyrosine 22 is modified to Phosphotyrosine; by Tyr-kinases. Residues 24–34 (KEVGVGMALRK) carry the Nuclear localization signal motif. The N-eicosanoyl ethanolamine site is built by cysteine 43 and arginine 109. A disulfide bridge connects residues cysteine 120 and cysteine 127. 129-131 (RVY) contacts (9Z,12Z)-octadecadienoate. Tyrosine 131 is a binding site for N-eicosanoyl ethanolamine. Tyrosine 131 contacts hexadecanoate. Tyrosine 131 is modified (phosphotyrosine).

Belongs to the calycin superfamily. Fatty-acid binding protein (FABP) family. Monomer. Most abundant in lens and retina (found in the mueller cells), moderately abundant in heart and testis (found in the Sertoli cells), and present in very low amounts in lung.

The protein resides in the cytoplasm. The protein localises to the nucleus. Its subcellular location is the synapse. It is found in the postsynaptic density. It localises to the secreted. The catalysed reaction is hexadecanoate(out) = hexadecanoate(in). It catalyses the reaction (9Z,12Z)-octadecadienoate(out) = (9Z,12Z)-octadecadienoate(in). It carries out the reaction (9Z)-octadecenoate(out) = (9Z)-octadecenoate(in). Functionally, intracellular carrier for long-chain fatty acids and related active lipids, such as endocannabinoids, that regulate the metabolism and actions of the ligands they bind. In addition to the cytosolic transport, selectively delivers specific fatty acids from the cytosol to the nucleus, wherein they activate nuclear receptors. Delivers retinoic acid to the nuclear receptor peroxisome proliferator-activated receptor delta; which promotes proliferation and survival. May also serve as a synaptic carrier of endocannabinoid at central synapses and thus controls retrograde endocannabinoid signaling. Modulates inflammation by regulating PTGES induction via NF-kappa-B activation, and prostaglandin E2 (PGE2) biosynthesis during inflammation. In Bos taurus (Bovine), this protein is Fatty acid-binding protein 5 (FABP5).